A 192-amino-acid chain; its full sequence is Erythropoietin (192 aa).

The signal sequence occupies residues 1–26 (MGVRECPALLLLLSLLLPPLGLPALG). Cystine bridges form between Cys-33/Cys-187 and Cys-55/Cys-59. A glycan (N-linked (GlcNAc...) asparagine) is linked at Asn-50. N-linked (GlcNAc...) asparagine glycans are attached at residues Asn-64 and Asn-109.

The protein belongs to the EPO/TPO family.

It localises to the secreted. Functionally, hormone involved in the regulation of erythrocyte proliferation and differentiation and the maintenance of a physiological level of circulating erythrocyte mass. Binds to EPOR leading to EPOR dimerization and JAK2 activation thereby activating specific downstream effectors, including STAT1 and STAT3. The protein is Erythropoietin (EPO) of Equus caballus (Horse).